The sequence spans 253 residues: UPF0246 protein lhv_1883 (253 aa).

Belongs to the UPF0246 family.

The protein is UPF0246 protein lhv_1883 of Lactobacillus helveticus (strain DPC 4571).